Reading from the N-terminus, the 350-residue chain is Probable L-aspartate decarboxylase (350 aa).

Residue Lys206 is modified to N6-(pyridoxal phosphate)lysine.

The protein belongs to the group II decarboxylase family. MfnA subfamily. The cofactor is pyridoxal 5'-phosphate.

The enzyme catalyses L-aspartate + H(+) = beta-alanine + CO2. Its pathway is cofactor biosynthesis; coenzyme A biosynthesis. Functionally, catalyzes the decarboxylation of L-aspartate to produce beta-alanine. This Haloarcula marismortui (strain ATCC 43049 / DSM 3752 / JCM 8966 / VKM B-1809) (Halobacterium marismortui) protein is Probable L-aspartate decarboxylase.